The chain runs to 394 residues: 4-hydroxyphenylpyruvate dioxygenase (394 aa).

2 VOC domains span residues 27–161 (GYDH…LIER) and 193–351 (HIDH…LFTK). 3 residues coordinate Fe cation: His196, His279, and Glu362.

This sequence belongs to the 4HPPD family. It depends on Fe cation as a cofactor.

It carries out the reaction 3-(4-hydroxyphenyl)pyruvate + O2 = homogentisate + CO2. It functions in the pathway amino-acid degradation; L-phenylalanine degradation; acetoacetate and fumarate from L-phenylalanine: step 3/6. The sequence is that of 4-hydroxyphenylpyruvate dioxygenase from Yarrowia lipolytica (strain CLIB 122 / E 150) (Yeast).